The chain runs to 373 residues: Cobalt-precorrin-5B C(1)-methyltransferase (373 aa).

It belongs to the CbiD family.

It carries out the reaction Co-precorrin-5B + S-adenosyl-L-methionine = Co-precorrin-6A + S-adenosyl-L-homocysteine. It participates in cofactor biosynthesis; adenosylcobalamin biosynthesis; cob(II)yrinate a,c-diamide from sirohydrochlorin (anaerobic route): step 6/10. In terms of biological role, catalyzes the methylation of C-1 in cobalt-precorrin-5B to form cobalt-precorrin-6A. This chain is Cobalt-precorrin-5B C(1)-methyltransferase, found in Halorhodospira halophila (strain DSM 244 / SL1) (Ectothiorhodospira halophila (strain DSM 244 / SL1)).